We begin with the raw amino-acid sequence, 170 residues long: MEGRKSEDEKNEAALACDVFESSNAKLPKNVFRSSFTWYCYEVINRSAFHIWLLLCLTLIVGWKVFSGIGGRRPSDSNMDGPQTKHKRNPGFLRRHSTIVILVISLAVSFSWEAFKMYRERTFGKQITQFAKEIIKSAPSTDMESWDRVAADFNSYMYENKLWNTEYFFC.

N-linked (GlcNAc...) asparagine glycosylation occurs at N45. The next 2 membrane-spanning stretches (helical) occupy residues 51 to 71 and 98 to 118; these read IWLL…GIGG and TIVI…FKMY.

The protein belongs to the DUP/COS family.

The protein resides in the membrane. Its function is as follows. May be involved in cell wall organization and biogenesis. The chain is Protein ECM34 (ECM34) from Saccharomyces cerevisiae (strain ATCC 204508 / S288c) (Baker's yeast).